Reading from the N-terminus, the 124-residue chain is Small ribosomal subunit protein uS13 (124 aa).

The disordered stretch occupies residues Arg-99–Ser-124. The segment covering Gln-101–Ser-124 has biased composition (basic residues).

The protein belongs to the universal ribosomal protein uS13 family. As to quaternary structure, part of the 30S ribosomal subunit. Forms a loose heterodimer with protein S19. Forms two bridges to the 50S subunit in the 70S ribosome.

Its function is as follows. Located at the top of the head of the 30S subunit, it contacts several helices of the 16S rRNA. In the 70S ribosome it contacts the 23S rRNA (bridge B1a) and protein L5 of the 50S subunit (bridge B1b), connecting the 2 subunits; these bridges are implicated in subunit movement. Contacts the tRNAs in the A and P-sites. The protein is Small ribosomal subunit protein uS13 of Caldicellulosiruptor bescii (strain ATCC BAA-1888 / DSM 6725 / KCTC 15123 / Z-1320) (Anaerocellum thermophilum).